The primary structure comprises 431 residues: POU domain, class 2, transcription factor 3 (431 aa).

Disordered regions lie at residues 1-39 (MVNL…RNGL), 130-180 (LLPQ…EPTD), and 248-267 (DAES…YPTL). Residues 176-250 (DEPTDLEELE…LLEKWLNDAE (75 aa)) enclose the POU-specific domain. Low complexity predominate over residues 251–267 (SSPSDPSASTPSSYPTL). A DNA-binding region (homeobox) is located at residues 274–333 (KRKKRTSIETNIRLTLEKRFQDNPKPSSEEISMIAEQLSMEKEVVRVWFCNRRQKEKRIN). Low complexity-rich tracts occupy residues 352–364 (PSGS…VPPV), 374–390 (SSCS…PGSG), and 398–419 (ASQN…NSSG). The tract at residues 352–419 (PSGSLGPLSV…SSSSSFNSSG (68 aa)) is disordered.

The protein belongs to the POU transcription factor family. Class-2 subfamily. As to quaternary structure, interacts (via the POU domain) with POU2AF1 and POU2AF2 in a DNA-dependent manner; this interaction recruits POU2AF2 to chromatin and increases POU2F3 transactivation activity. As to expression, skin, thymus, stomach and testis.

It is found in the nucleus. Functionally, transcription factor that binds to the octamer motif (5'-ATTTGCAT-3'). Regulates cell type-specific differentiation pathways. Involved in the regulation of keratinocytes differentiation. The POU2F3-POU2AF2/POU2AF3 complex drives the expression of tuft-cell-specific genes, a rare chemosensory cells that coordinate immune and neural functions within mucosal epithelial tissues. The chain is POU domain, class 2, transcription factor 3 (Pou2f3) from Mus musculus (Mouse).